The primary structure comprises 542 residues: Exopolysaccharide phosphotransferase CpsY (542 aa).

The tract at residues 522 to 542 (SPTVSAPLEDGQTANPAQTAR) is disordered. Over residues 533–542 (QTANPAQTAR) the composition is skewed to polar residues.

It belongs to the stealth family.

This chain is Exopolysaccharide phosphotransferase CpsY (cpsY), found in Mycobacterium leprae (strain TN).